We begin with the raw amino-acid sequence, 154 residues long: Transcriptional repressor NrdR (154 aa).

Residues 3–34 (CPFCNHGELKVIDSRNAPESNAIKRRRECLRC) fold into a zinc finger. Positions 48–138 (VQVLKRDGRY…VYRRFKDVGE (91 aa)) constitute an ATP-cone domain.

Belongs to the NrdR family. Requires Zn(2+) as cofactor.

Its function is as follows. Negatively regulates transcription of bacterial ribonucleotide reductase nrd genes and operons by binding to NrdR-boxes. The polypeptide is Transcriptional repressor NrdR (Chlamydia trachomatis serovar L2 (strain ATCC VR-902B / DSM 19102 / 434/Bu)).